A 285-amino-acid chain; its full sequence is Hypersensitive-induced response protein 3 (285 aa).

A lipid anchor (N-myristoyl glycine) is attached at glycine 2. 2 coiled-coil regions span residues 113–139 (NLDD…MTAY) and 165–185 (NAAA…KIIQ).

Self-interacts and forms heteromers. Interacts with NB-LRR class of R proteins before R proteins (e.g. RPS2 or RPM1) are activated by the effectors.

It is found in the cell membrane. The protein is Hypersensitive-induced response protein 3 (HIR3) of Arabidopsis thaliana (Mouse-ear cress).